We begin with the raw amino-acid sequence, 865 residues long: Carbohydrate-responsive element-binding protein (865 aa).

2 disordered regions span residues 15 to 41 (PRVV…AGGL) and 53 to 77 (MVSS…LADF). Residues Ser20, Ser23, and Ser25 each carry the phosphoserine modification. Thr27 is modified (phosphothreonine). Ser196 is modified (phosphoserine). Disordered regions lie at residues 334 to 392 (GILG…TKMP) and 500 to 653 (QPRC…LSRG). Residues 351-368 (GMTPLSGNTRLQARNSCS) are compositionally biased toward polar residues. The segment covering 515 to 533 (ASPPTLTSATASPTATATA) has biased composition (low complexity). At Ser568 the chain carries Phosphoserine; by AMPK. Positions 583–597 (PPIPAPTPPRPPPGP) are enriched in pro residues. Phosphoserine is present on residues Ser615, Ser627, and Ser644. The region spanning 662–716 (NRRITHISAEQKRRFNIKLGFDTLHGLVSTLSAQPSLKVSKATTLQKTAEYILML) is the bHLH domain. The leucine-zipper stretch occupies residues 716 to 737 (LQQERAAMQEEAQQLRDEIEEL).

In terms of assembly, binds DNA as a heterodimer with TCFL4/MLX. Phosphorylation at Ser-568 by AMPK inactivates the DNA-binding activity.

It is found in the nucleus. Functionally, transcriptional repressor. Binds to the canonical and non-canonical E box sequences 5'-CACGTG-3'. This chain is Carbohydrate-responsive element-binding protein (Mlxipl), found in Rattus norvegicus (Rat).